We begin with the raw amino-acid sequence, 191 residues long: Glycerol-3-phosphate acyltransferase (191 aa).

5 helical membrane passes run 3-23 (YLIVALSSYLLGSIPFGFILT), 51-71 (TLGYATLLLDITKAVLPVLYV), 78-98 (YIFIASLSAFLGHVFPIWLKF), 108-128 (VGILFSINIFLGLVFIISWAV), and 150-170 (YLIVFENYNSIFFIIMFVLIF).

It belongs to the PlsY family. As to quaternary structure, probably interacts with PlsX.

The protein localises to the cell inner membrane. The enzyme catalyses an acyl phosphate + sn-glycerol 3-phosphate = a 1-acyl-sn-glycero-3-phosphate + phosphate. It participates in lipid metabolism; phospholipid metabolism. Its function is as follows. Catalyzes the transfer of an acyl group from acyl-phosphate (acyl-PO(4)) to glycerol-3-phosphate (G3P) to form lysophosphatidic acid (LPA). This enzyme utilizes acyl-phosphate as fatty acyl donor, but not acyl-CoA or acyl-ACP. This chain is Glycerol-3-phosphate acyltransferase, found in Pelagibacter ubique (strain HTCC1062).